Consider the following 1468-residue polypeptide: MSSAGVVEMQKAASFRREGGGSMASMWLSADGNGAFSRSSSSSSRRMRGEEDDEEALRWAALQKLPTYDRVRAAILPMVEGEGGEAGGGGGGRRVVVDVHSLGPHERRALLERLVRVADDDNERFLLKLKERISRVGIDMPTIEVRFEHLEVEAEVRVGNSGIPTVLNSITNKIEEAANALGILPTRKQTLRILHDISGIIKPKRMTLLLGPPGSGKTTFLLALAGRLKDLKFSGQVTYNGHQMEDFVPQRTAAYISQHDLHIGEMTVRETLSFSARCQGVGSRFDMLTELTRREKAANIKPDADVDAFMKASAMEGQESNLITDYILKILGLEICADTMVGDDMVRGISGGQRKRVTTGEMLVGPANAFFMDEISTGLDSSTTFQIVKSLRQTIHILGGTAVISLLQPAPETYDLFDDIILLSDGHIVYQGPRENVLEFFELMGFKCPERKGVADFLQEVTSRKDQKQYWAQHDKPYRYVPIKEFASAFQSFHTGRSIANELATPFDKSKSHPAALTTSRYGVSAMELLKANIDRELLLIKRNSFVYIFRTIQLMTVSAMAMTVFFRTKMHRDSVADGVIFMGALFFAVMMIMLNGLSELPLTIFKLPVFFKQRDLLFFPAWTYTIPSWILKSPMSFIEVGGFCFMSYYVIGFDPNVGRFFKQYLLMLAVSQMAAALFRFVGGAARNLIVANVFGSFMLLIFMVLGGFILARDKVNKWWIWGYWISPMMYAQNAVSVNEFLGHSWDKVLNNSLSNETLGVQALMSRGIFPEAKWYWIGFGALLGFIMLFNILFTLALTYLKPDGKSQPSISEEELKEKQANINGNVLDVDTMASSNNLAIVGSTGTGSEIADNSQPTQRGMVLPFTPLSLTFEDIKYSVDMPQEMKAHGIVEDRLELLKGVSGCFRPGVLTALMGVSGAGKTTLMDVLAGRKTGGYIEGNISISGYPKKQETFARVSGYCEQNDIHSPQVTVSESLLFSAWLRLPKDVDSNTRKMFIEEVMELVELKPLRDALVGLPGVNGLSIEQRKRLTIAVELVANPSIIFMDEPTSGLDARAAAIVMRTVRNTVNTGRTVVCTIHQPSIDIFEAFDELFLMKRGGEEIYVGPLGHHSSELIKYFEGIQGVSKITDGYNPATWMLEVTTVSQEQALDVDFCDIYRKSELFQRNKALIQELSTPPPGSSELYFPTQYSQSFLIQCLACLWKQHLSYWRNPPYNAIRLFFTTVIALIFGTIFWDLGGKMGQSQDLFNAMGSMYAAVLFIGVLNGQSVQPVVSVERTVFYRERAAGMYSALPYAFGQVAIEFPYTLVQSVIYSIIVYSMIGFQWTVAKFFWYLFFMFFTLLYFTFYGMMAVGLTPSYHVASIVSSAFYAIWNLFTGFVISRPATPVWWRWYCWICPVAWTLYGLIVSQYGDIVTPMDDGIPVNVFVENYFDFKHSWLGFVAVVIVAFTMLFAFLFGFAIMKLNFQKR.

Residues 33-53 (NGAFSRSSSSSSRRMRGEEDD) are disordered. The ABC transporter 1 domain occupies 178-450 (ANALGILPTR…FELMGFKCPE (273 aa)). An ATP-binding site is contributed by 211-218 (GPPGSGKT). The ABC transmembrane type-2 1 domain occupies 528 to 741 (ELLKANIDRE…AQNAVSVNEF (214 aa)). The next 6 membrane-spanning stretches (helical) occupy residues 546 to 566 (FVYI…MTVF), 575 to 595 (SVAD…MIML), 634 to 654 (SPMS…VIGF), 666 to 686 (LLML…GGAA), 690 to 710 (IVAN…GGFI), and 778 to 798 (IGFG…TLAL). In terms of domain architecture, ABC transporter 2 spans 871–1123 (LTFEDIKYSV…ELIKYFEGIQ (253 aa)). 916–923 (GVSGAGKT) lines the ATP pocket. The region spanning 1196-1410 (IQCLACLWKQ…TLYGLIVSQY (215 aa)) is the ABC transmembrane type-2 2 domain. The next 7 membrane-spanning stretches (helical) occupy residues 1217–1237 (AIRL…FWDL), 1247–1267 (LFNA…LNGQ), 1303–1323 (FPYT…MIGF), 1330–1350 (FFWY…YGMM), 1360–1380 (VASI…GFVI), 1387–1407 (VWWR…GLIV), and 1440–1460 (FVAV…GFAI).

Belongs to the ABC transporter superfamily. ABCG family. PDR (TC 3.A.1.205) subfamily.

The protein localises to the membrane. May be a general defense protein. The chain is ABC transporter G family member 34 from Oryza sativa subsp. japonica (Rice).